The following is a 32-amino-acid chain: Conotoxin pr6b (32 aa).

Residues Pro6, Pro13, Pro20, and Pro29 each carry the 4-hydroxyproline modification. Cystine bridges form between Cys7/Cys18, Cys14/Cys23, and Cys17/Cys31.

Expressed by the venom duct.

The protein resides in the secreted. Functionally, intraperitoneal injection into fish (0.5 nmol) provokes vertical suspension and paralysis after 6 minutes. The polypeptide is Conotoxin pr6b (Conus parius (Cone snail)).